Consider the following 588-residue polypeptide: MSAGEVERLVSELSGGTGGDEEEEWLYGDENEVERPEEENASANPPSGIEDETAENGVPKPKVTETEDDSDSDSDDDEDDVHVTIGDIKTGAPQYGSYGTAPVNLNIKTGGRVYGTTGTKVKGVDLDAPGSINGVPLLEVDLDSFEDKPWRKPGADLSDYFNYGFNEDTWKAYCEKQKRIRMGLEVIPVTSTTNKITAEDCTMEVTPGAEIQDGRFNLFKVQQGRTGNSEKETALPSAKAEFTSPPSLFKTGLPPSRNSTSSQSQTSTASRKANSSVGKWQDRYGRAESPDLRRLPGAIDVIGQTITISRVEGRRRANENSNIQVLSERSATAVDNNFSKPPPFFPPGAPPTHLPPPPFLPPPPTVSTAPPLIPPPGIPITVPPPGFPPPPGAPPPSLIPTIESGHSSGYDSRSARAFPYGNVAFPHLPGSAPSWPSLVDTSKQWDYYARREKDRDRERDRDRERDRDRDRERERTRERERERDHSPTPSVFNSDEERYRYREYAERGYERHRASREKEERHRERRHREKEETRHKSSRSNSRRRHESEEGDSHRRHKHKKSKRSKEGKEAGSEPAPEQESTEATPAE.

A compositionally biased stretch (basic and acidic residues) spans 1-10 (MSAGEVERLV). Disordered regions lie at residues 1–81 (MSAG…EDDV), 223–291 (QGRT…ESPD), and 334–588 (VDNN…TPAE). The tract at residues 1-96 (MSAGEVERLV…DIKTGAPQYG (96 aa)) is sufficient for interaction with PAPOLA. The segment at 1–341 (MSAGEVERLV…TAVDNNFSKP (341 aa)) is necessary for stimulating PAPOLA activity. Acidic residues-rich tracts occupy residues 19–40 (GDEE…EEEN) and 66–80 (TEDD…DEDD). A phosphoserine mark is found at serine 70, serine 72, and serine 74. A sufficient for interaction with CPSF4 region spans residues 122-228 (KGVDLDAPGS…FKVQQGRTGN (107 aa)). Residues 259-270 (STSSQSQTSTAS) are compositionally biased toward low complexity. Residues 280-291 (WQDRYGRAESPD) show a composition bias toward basic and acidic residues. A Phosphoserine modification is found at serine 289. A compositionally biased stretch (pro residues) spans 340–398 (KPPPFFPPGAPPTHLPPPPFLPPPPTVSTAPPLIPPPGIPITVPPPGFPPPPGAPPPSL). Tyrosine 420 carries the post-translational modification Phosphotyrosine. The segment at 437 to 588 (SLVDTSKQWD…QESTEATPAE (152 aa)) is sufficient for interaction with CPSF1 and CSTF3. Positions 448-486 (YARREKDRDRERDRDRERDRDRDRERERTRERERERDHS) are enriched in basic and acidic residues. The interval 451–484 (REKDRDRERDRDRERDRDRDRERERTRERERERD) is arg/Asp/Glu-rich domain. A Phosphoserine modification is found at serine 486. A Phosphothreonine modification is found at threonine 488. Residues serine 490 and serine 494 each carry the phosphoserine modification. The segment covering 495–522 (DEERYRYREYAERGYERHRASREKEERH) has biased composition (basic and acidic residues). Positions 536 to 545 (KSSRSNSRRR) are enriched in basic residues. Serine 548 carries the post-translational modification Phosphoserine. Residues 554-564 (HRRHKHKKSKR) show a composition bias toward basic residues.

The protein belongs to the FIP1 family. In terms of assembly, component of the cleavage and polyadenylation specificity factor (CPSF) complex, composed of CPSF1, CPSF2, CPSF3, CPSF4 and FIP1L1. Found in a complex with CPSF1, FIP1L1 and PAPOLA. Interacts with CPSF1, CPSF4, CSTF2 and CSTF3. Interacts with AHCYL1 (when phosphorylated); the interaction is direct and associates AHCYL1 with the CPSF complex and RNA. Interacts with PAPOLA; the interaction seems to be increased by the interaction with AHCYL1. Interacts with NUDT21/CPSF5; this interaction occurs in a RNA sequence-specific manner. Interacts (preferentially via unphosphorylated form and Arg/Glu/Asp-rich domain) with CPSF6 (via Arg/Ser-rich domain); this interaction mediates, at least in part, the interaction between the CFIm and CPSF complexes and may be inhibited by CPSF6 hyper-phosphorylation. Interacts (preferentially via unphosphorylated form and Arg/Asp/Glu-rich domain) with CPSF7 (via Arg/Ser-rich domain); this interaction mediates, at least in part, the interaction between the CFIm and CPSF complexes and may be inhibited by CPSF7 hyper-phosphorylation.

The protein resides in the nucleus. Functionally, component of the cleavage and polyadenylation specificity factor (CPSF) complex that plays a key role in pre-mRNA 3'-end formation, recognizing the AAUAAA signal sequence and interacting with poly(A) polymerase and other factors to bring about cleavage and poly(A) addition. FIP1L1 contributes to poly(A) site recognition and stimulates poly(A) addition. Binds to U-rich RNA sequence elements surrounding the poly(A) site. May act to tether poly(A) polymerase to the CPSF complex. The polypeptide is Pre-mRNA 3'-end-processing factor FIP1 (FIP1L1) (Pongo abelii (Sumatran orangutan)).